Consider the following 277-residue polypeptide: Bis(5'-nucleosyl)-tetraphosphatase, symmetrical (277 aa).

The protein belongs to the Ap4A hydrolase family.

It carries out the reaction P(1),P(4)-bis(5'-adenosyl) tetraphosphate + H2O = 2 ADP + 2 H(+). In terms of biological role, hydrolyzes diadenosine 5',5'''-P1,P4-tetraphosphate to yield ADP. The chain is Bis(5'-nucleosyl)-tetraphosphatase, symmetrical from Bordetella pertussis (strain Tohama I / ATCC BAA-589 / NCTC 13251).